The chain runs to 429 residues: Protein ABERRANT PANICLE ORGANIZATION 1 (429 aa).

The span at 1 to 11 shows a compositional bias: pro residues; sequence MMNPRRLPPLP. A disordered region spans residues 1 to 21; sequence MMNPRRLPPLPSSTSSASAAD. Residues 25 to 71 enclose the F-box domain; the sequence is PRVWRRLPQPLVDRILACLPTPSFLRLRAACRRFYHLLFSSPFLHSH. The next 2 membrane-spanning stretches (helical) occupy residues 72 to 92 and 112 to 132; these read LLLS…GHLL and VAGG…LAFL. Kelch repeat units follow at residues 229–277, 284–339, and 350–397; these read MAFA…ELGG, RVAL…AEGG, and YVVL…GAAG.

In terms of assembly, part of a putative SCF (ASK/Cullin/F-box) ubiquitin ligase complex. Interacts with FL/APO2. In terms of tissue distribution, expressed in apical meristems and the lateral organ primordia throughout development. Expressed in seedlings, roots, leaves, shoot apical meristem (SAM), developing panicles, and, at lower levels, in developing seeds.

The protein resides in the membrane. Its pathway is protein modification; protein ubiquitination. Its function is as follows. Component of SCF(ASK-cullin-F-box) E3 ubiquitin ligase complexes, which may mediate the ubiquitination and subsequent proteasomal degradation of target proteins. Together with FL/APO2, involved in the temporal regulation of meristem identity during both vegetative and reproductive developments in an APO2-dependent manner. Promotes spikelet formation by suppressing the precocious conversion of inflorescence meristems to spikelet meristems, probably via a positive regulation of class-C floral homeotic genes, but not of class-B genes, and through the control of cell proliferation in meristems. Mediates culm development and strength/diameter enhancement at internodes. Required for the regulation of the plastochron, floral organ identity, and floral determinacy. Controls the number of primary rachis branches (PRBs). May trigger the formation of vascular bundle systems which, consequently, promote carbohydrate translocation to panicles. Involved in ozone-induced grain yield regulation. The sequence is that of Protein ABERRANT PANICLE ORGANIZATION 1 from Oryza sativa subsp. japonica (Rice).